A 140-amino-acid polypeptide reads, in one-letter code: 3-hydroxyacyl-[acyl-carrier-protein] dehydratase FabZ (140 aa).

The active site involves His47.

The protein belongs to the thioester dehydratase family. FabZ subfamily.

Its subcellular location is the cytoplasm. The catalysed reaction is a (3R)-hydroxyacyl-[ACP] = a (2E)-enoyl-[ACP] + H2O. In terms of biological role, involved in unsaturated fatty acids biosynthesis. Catalyzes the dehydration of short chain beta-hydroxyacyl-ACPs and long chain saturated and unsaturated beta-hydroxyacyl-ACPs. The protein is 3-hydroxyacyl-[acyl-carrier-protein] dehydratase FabZ of Streptococcus pneumoniae (strain CGSP14).